Consider the following 517-residue polypeptide: GMP synthase [glutamine-hydrolyzing] (517 aa).

In terms of domain architecture, Glutamine amidotransferase type-1 spans 4–193 (KIIILDFGSQ…VVDICGGKQD (190 aa)). Cys79 acts as the Nucleophile in catalysis. Catalysis depends on residues His167 and Glu169. Positions 194-382 (WSAASFIETT…LGMPEHLITR (189 aa)) constitute a GMPS ATP-PPase domain. An ATP-binding site is contributed by 221-227 (SGGVDSS).

As to quaternary structure, homodimer.

It catalyses the reaction XMP + L-glutamine + ATP + H2O = GMP + L-glutamate + AMP + diphosphate + 2 H(+). The protein operates within purine metabolism; GMP biosynthesis; GMP from XMP (L-Gln route): step 1/1. Catalyzes the synthesis of GMP from XMP. This is GMP synthase [glutamine-hydrolyzing] from Phocaeicola vulgatus (strain ATCC 8482 / DSM 1447 / JCM 5826 / CCUG 4940 / NBRC 14291 / NCTC 11154) (Bacteroides vulgatus).